The sequence spans 443 residues: Nuclear distribution protein nudF (443 aa).

One can recognise a LisH domain in the interval 9–41; that stretch reads QAEELHKSIIAYLSSINASRSCEVLREELQVDS. Positions 60 to 87 form a coiled coil; it reads TGIARLQKKILDLESKLAGLQTELDTIS. WD repeat units follow at residues 111 to 152, 154 to 194, 198 to 238, 241 to 280, 283 to 343, 345 to 384, 388 to 427, and 429 to 443; these read SHRD…RTLK, HMRP…ANVR, GHDH…CVKV, SQGS…SVAS, GHEN…IKTL, GHDN…RLVK, AHGH…PGFQ, and VIAT…RIFT.

The protein belongs to the WD repeat LIS1/nudF family. Self-associates. Interacts with nudE and dynein.

Its subcellular location is the cytoplasm. The protein localises to the cytoskeleton. The protein resides in the spindle pole. Functionally, positively regulates the activity of the minus-end directed microtubule motor protein dynein. May enhance dynein-mediated microtubule sliding by targeting dynein to the microtubule plus end. Required for nuclear migration during vegetative growth as well as development. Required for retrograde early endosome (EE) transport from the hyphal tip. Required for localization of dynein to the mitotic spindle poles. Recruits additional proteins to the dynein complex at SPBs. This chain is Nuclear distribution protein nudF, found in Aspergillus niger (strain ATCC MYA-4892 / CBS 513.88 / FGSC A1513).